The chain runs to 354 residues: Putative Xaa-Pro aminopeptidase (354 aa).

5 residues coordinate Mn(2+): Asp-213, Asp-224, His-290, Glu-319, and Glu-333.

This sequence belongs to the peptidase M24B family. Mn(2+) is required as a cofactor.

It catalyses the reaction Release of any N-terminal amino acid, including proline, that is linked to proline, even from a dipeptide or tripeptide.. The sequence is that of Putative Xaa-Pro aminopeptidase (pepP) from Mycoplasma genitalium (strain ATCC 33530 / DSM 19775 / NCTC 10195 / G37) (Mycoplasmoides genitalium).